The following is a 1368-amino-acid chain: DNA-directed RNA polymerase subunit beta (1368 aa).

The protein belongs to the RNA polymerase beta chain family. As to quaternary structure, the RNAP catalytic core consists of 2 alpha, 1 beta, 1 beta' and 1 omega subunit. When a sigma factor is associated with the core the holoenzyme is formed, which can initiate transcription.

It catalyses the reaction RNA(n) + a ribonucleoside 5'-triphosphate = RNA(n+1) + diphosphate. In terms of biological role, DNA-dependent RNA polymerase catalyzes the transcription of DNA into RNA using the four ribonucleoside triphosphates as substrates. This chain is DNA-directed RNA polymerase subunit beta, found in Legionella pneumophila (strain Paris).